A 146-amino-acid polypeptide reads, in one-letter code: Histone H2A.1 (146 aa).

The tract at residues 118-146 (SPAAAEKEAKSPKKKTSTKSPKKKVAAKE) is disordered. Short sequence motifs (SPKK motif) lie at residues 128 to 131 (SPKK) and 137 to 140 (SPKK). Over residues 129-146 (PKKKTSTKSPKKKVAAKE) the composition is skewed to basic residues.

This sequence belongs to the histone H2A family. In terms of assembly, the nucleosome is a histone octamer containing two molecules each of H2A, H2B, H3 and H4 assembled in one H3-H4 heterotetramer and two H2A-H2B heterodimers. The octamer wraps approximately 147 bp of DNA. In terms of processing, phosphorylated within its C-terminal part, probably at the SPKK motifs. Expressed preferentially in meristematic tissues of young seedlings, in stigma and ovary but not in pollen.

The protein localises to the nucleus. It localises to the chromosome. Core component of nucleosome. Nucleosomes wrap and compact DNA into chromatin, limiting DNA accessibility to the cellular machineries which require DNA as a template. Histones thereby play a central role in transcription regulation, DNA repair, DNA replication and chromosomal stability. DNA accessibility is regulated via a complex set of post-translational modifications of histones, also called histone code, and nucleosome remodeling. This chain is Histone H2A.1 (H2A-9), found in Triticum aestivum (Wheat).